The chain runs to 757 residues: RNA cytosine C(5)-methyltransferase NSUN2 (757 aa).

The disordered stretch occupies residues 1-35; it reads MGRRARGRRFQQPPQPEGEEDASDGGRKRGQAGWE. Position 23 is a phosphoserine (S23). K46 is covalently cross-linked (Glycyl lysine isopeptide (Lys-Gly) (interchain with G-Cter in SUMO2)). S139 is modified (phosphoserine; by AURKB). S-adenosyl-L-methionine is bound by residues 184-190, D215, D242, and D268; that span reads CAAPGSK. C321 functions as the Nucleophile in the catalytic mechanism. The interval 436-504 is disordered; sequence NKRQPKVQNK…EKKDGVCGPP (69 aa). S456 and S473 each carry phosphoserine. The span at 463-476 shows a compositional bias: polar residues; that stretch reads GNPSDQSELESQMI. Residues K510 and K515 each participate in a glycyl lysine isopeptide (Lys-Gly) (interchain with G-Cter in SUMO2) cross-link. The residue at position 585 (K585) is an N6-acetyllysine; alternate. K585 bears the N6-malonyllysine; alternate mark. K585 participates in a covalent cross-link: Glycyl lysine isopeptide (Lys-Gly) (interchain with G-Cter in SUMO2); alternate. At S592 the chain carries Phosphoserine. Residues K639, K653, and K659 each participate in a glycyl lysine isopeptide (Lys-Gly) (interchain with G-Cter in SUMO2) cross-link. Positions 716-757 are disordered; that stretch reads LTNENAASPEQPGDEDAKQTAQDPCVPDSVPGCDAAAAEPSR. Position 717 is a phosphothreonine (T717). S723 is subject to Phosphoserine.

Belongs to the class I-like SAM-binding methyltransferase superfamily. RsmB/NOP family. TRM4 subfamily. Interacts with NPM1 and NCL during interphase; interaction is disrupted following phosphorylation at Ser-139. Post-translationally, phosphorylated at Ser-139 by AURKB during mitosis, leading to abolish methyltransferase activity and the interaction with NPM1. As to expression, ubiquitously expressed at low level. Up-regulated in tumors. Dynamically expressed during morphogenesis and in adult skin: in adult skin, expression is up-regulated in the bulge and hair germ as soon as the hair follicle enters its growing phase (anagen). During anagen, expressed at highest level in cells of the hair germ that give rise to the hair matrix.

It localises to the nucleus. It is found in the nucleolus. The protein localises to the cytoplasm. The protein resides in the mitochondrion. Its subcellular location is the cytoskeleton. It localises to the spindle. It is found in the secreted. The protein localises to the extracellular exosome. The catalysed reaction is cytidine(48) in tRNA + S-adenosyl-L-methionine = 5-methylcytidine(48) in tRNA + S-adenosyl-L-homocysteine + H(+). It catalyses the reaction cytidine(49) in tRNA + S-adenosyl-L-methionine = 5-methylcytidine(49) in tRNA + S-adenosyl-L-homocysteine + H(+). The enzyme catalyses cytidine(50) in tRNA + S-adenosyl-L-methionine = 5-methylcytidine(50) in tRNA + S-adenosyl-L-homocysteine + H(+). It carries out the reaction cytidine(34) in tRNA precursor + S-adenosyl-L-methionine = 5-methylcytidine(34) in tRNA precursor + S-adenosyl-L-homocysteine + H(+). The catalysed reaction is a cytidine in mRNA + S-adenosyl-L-methionine = a 5-methylcytidine in mRNA + S-adenosyl-L-homocysteine + H(+). With respect to regulation, inhibited by magnesium ions. Functionally, RNA cytosine C(5)-methyltransferase that methylates cytosine to 5-methylcytosine (m5C) in various RNAs, such as tRNAs, mRNAs and some long non-coding RNAs (lncRNAs). Involved in various processes, such as epidermal stem cell differentiation, testis differentiation and maternal to zygotic transition during early development: acts by increasing protein synthesis; cytosine C(5)-methylation promoting tRNA stability and preventing mRNA decay. Methylates cytosine to 5-methylcytosine (m5C) at positions 34 and 48 of intron-containing tRNA(Leu)(CAA) precursors, and at positions 48, 49 and 50 of tRNA(Gly)(GCC) precursors. tRNA methylation is required generation of RNA fragments derived from tRNAs (tRFs). Also mediates C(5)-methylation of mitochondrial tRNAs. Catalyzes cytosine C(5)-methylation of mRNAs, leading to stabilize them and prevent mRNA decay: mRNA stabilization involves YBX1 that specifically recognizes and binds m5C-modified transcripts. Cytosine C(5)-methylation of mRNAs also regulates mRNA export: methylated transcripts are specifically recognized by THOC4/ALYREF, which mediates mRNA nucleo-cytoplasmic shuttling. Also mediates cytosine C(5)-methylation of non-coding RNAs, such as vault RNAs (vtRNAs), promoting their processing into regulatory small RNAs. Cytosine C(5)-methylation of vtRNA VTRNA1.1 promotes its processing into small-vault RNA4 (svRNA4) and regulates epidermal differentiation. May act downstream of Myc to regulate epidermal cell growth and proliferation. Required for proper spindle assembly and chromosome segregation, independently of its methyltransferase activity. The protein is RNA cytosine C(5)-methyltransferase NSUN2 of Mus musculus (Mouse).